We begin with the raw amino-acid sequence, 71 residues long: MYHSYSHDLTNYLYNYFSSTTSWLVFIILSLDTINATFSNITFVDILMETGFTKNRSLDQTTCGIKFGFVN.

A helical transmembrane segment spans residues 12-34 (YLYNYFSSTTSWLVFIILSLDTI).

Its subcellular location is the membrane. This is an uncharacterized protein from Schizosaccharomyces pombe (strain 972 / ATCC 24843) (Fission yeast).